The chain runs to 109 residues: METRAIVRGVRLSVDKGRPVADLVRGKKVDQALNILEFTQKKAAVIIKKALESAIANAEHNDGADIDELKVKTIHVEQGATLKRFSARAKGRGNRISKPTCHIFVTVGN.

The protein belongs to the universal ribosomal protein uL22 family. Part of the 50S ribosomal subunit.

Its function is as follows. This protein binds specifically to 23S rRNA; its binding is stimulated by other ribosomal proteins, e.g. L4, L17, and L20. It is important during the early stages of 50S assembly. It makes multiple contacts with different domains of the 23S rRNA in the assembled 50S subunit and ribosome. The globular domain of the protein is located near the polypeptide exit tunnel on the outside of the subunit, while an extended beta-hairpin is found that lines the wall of the exit tunnel in the center of the 70S ribosome. This is Large ribosomal subunit protein uL22 from Methylibium petroleiphilum (strain ATCC BAA-1232 / LMG 22953 / PM1).